Here is a 261-residue protein sequence, read N- to C-terminus: MTHQAHAYHMVDPSPWPLTGAVAALLMTSGLAVWFHFHSTTLMALGTVLLLLTMYQWWRDIIREGTFQGHHTPPVQKGLRYGMILFITSEVFFFLGFFWAFYHASLAPTPELGGCWPPTGITTLDPFEVPLLNTAVLLASGVTVTWAHHSIMEGERKQAIHSLTLTILLGFYFTFLQGLEYYDAPFTIADGVYGSTFFVATGFHGLHVIIGSTFLAVCLLRQIRYHFTSEHHFGFEAAAWYWHFVDVVWLFLYISIYWWGS.

Residues methionine 1 to proline 15 lie on the Mitochondrial matrix side of the membrane. A helical transmembrane segment spans residues tryptophan 16 to tryptophan 34. Topologically, residues phenylalanine 35–threonine 40 are mitochondrial intermembrane. The helical transmembrane segment at threonine 41–threonine 66 threads the bilayer. At phenylalanine 67–threonine 72 the chain is on the mitochondrial matrix side. A helical membrane pass occupies residues proline 73–serine 105. Residues leucine 106–glutamate 128 are Mitochondrial intermembrane-facing. Residues valine 129–methionine 152 traverse the membrane as a helical segment. The Mitochondrial matrix segment spans residues glutamate 153–glutamate 155. A helical membrane pass occupies residues arginine 156–aspartate 183. Over alanine 184–aspartate 190 the chain is Mitochondrial intermembrane. A helical transmembrane segment spans residues glycine 191–isoleucine 223. The Mitochondrial matrix segment spans residues arginine 224–histidine 232. Residues phenylalanine 233–isoleucine 256 traverse the membrane as a helical segment. The Mitochondrial intermembrane portion of the chain corresponds to tyrosine 257–serine 261.

This sequence belongs to the cytochrome c oxidase subunit 3 family. As to quaternary structure, component of the cytochrome c oxidase (complex IV, CIV), a multisubunit enzyme composed of 14 subunits. The complex is composed of a catalytic core of 3 subunits MT-CO1, MT-CO2 and MT-CO3, encoded in the mitochondrial DNA, and 11 supernumerary subunits COX4I, COX5A, COX5B, COX6A, COX6B, COX6C, COX7A, COX7B, COX7C, COX8 and NDUFA4, which are encoded in the nuclear genome. The complex exists as a monomer or a dimer and forms supercomplexes (SCs) in the inner mitochondrial membrane with NADH-ubiquinone oxidoreductase (complex I, CI) and ubiquinol-cytochrome c oxidoreductase (cytochrome b-c1 complex, complex III, CIII), resulting in different assemblies (supercomplex SCI(1)III(2)IV(1) and megacomplex MCI(2)III(2)IV(2)).

It is found in the mitochondrion inner membrane. It catalyses the reaction 4 Fe(II)-[cytochrome c] + O2 + 8 H(+)(in) = 4 Fe(III)-[cytochrome c] + 2 H2O + 4 H(+)(out). In terms of biological role, component of the cytochrome c oxidase, the last enzyme in the mitochondrial electron transport chain which drives oxidative phosphorylation. The respiratory chain contains 3 multisubunit complexes succinate dehydrogenase (complex II, CII), ubiquinol-cytochrome c oxidoreductase (cytochrome b-c1 complex, complex III, CIII) and cytochrome c oxidase (complex IV, CIV), that cooperate to transfer electrons derived from NADH and succinate to molecular oxygen, creating an electrochemical gradient over the inner membrane that drives transmembrane transport and the ATP synthase. Cytochrome c oxidase is the component of the respiratory chain that catalyzes the reduction of oxygen to water. Electrons originating from reduced cytochrome c in the intermembrane space (IMS) are transferred via the dinuclear copper A center (CU(A)) of subunit 2 and heme A of subunit 1 to the active site in subunit 1, a binuclear center (BNC) formed by heme A3 and copper B (CU(B)). The BNC reduces molecular oxygen to 2 water molecules using 4 electrons from cytochrome c in the IMS and 4 protons from the mitochondrial matrix. This chain is Cytochrome c oxidase subunit 3 (mt-co3), found in Gadus morhua (Atlantic cod).